The primary structure comprises 209 residues: A-type ATP synthase subunit D (209 aa).

This sequence belongs to the V-ATPase D subunit family. As to quaternary structure, has multiple subunits with at least A(3), B(3), C, D, E, F, H, I and proteolipid K(x).

It localises to the cell membrane. Functionally, component of the A-type ATP synthase that produces ATP from ADP in the presence of a proton gradient across the membrane. In Thermoplasma volcanium (strain ATCC 51530 / DSM 4299 / JCM 9571 / NBRC 15438 / GSS1), this protein is A-type ATP synthase subunit D.